A 413-amino-acid chain; its full sequence is Tyrosine--tRNA ligase (413 aa).

Residues 59-68 (PTAPDIHIGH) carry the 'HIGH' region motif. The 'KMSKS' region motif lies at 243 to 247 (KMSKS). Lysine 246 contributes to the ATP binding site. Residues 351–411 (LAIGQLLKQA…GKRRFARVTL (61 aa)) form the S4 RNA-binding domain.

The protein belongs to the class-I aminoacyl-tRNA synthetase family. TyrS type 2 subfamily. In terms of assembly, homodimer.

It is found in the cytoplasm. It catalyses the reaction tRNA(Tyr) + L-tyrosine + ATP = L-tyrosyl-tRNA(Tyr) + AMP + diphosphate + H(+). Its function is as follows. Catalyzes the attachment of tyrosine to tRNA(Tyr) in a two-step reaction: tyrosine is first activated by ATP to form Tyr-AMP and then transferred to the acceptor end of tRNA(Tyr). This is Tyrosine--tRNA ligase from Burkholderia lata (strain ATCC 17760 / DSM 23089 / LMG 22485 / NCIMB 9086 / R18194 / 383).